Consider the following 225-residue polypeptide: Small ribosomal subunit protein uS3 (225 aa).

In terms of domain architecture, KH type-2 spans 38-106 (LRAHLRRKLS…DVALNIVEIR (69 aa)).

It belongs to the universal ribosomal protein uS3 family. As to quaternary structure, part of the 30S ribosomal subunit. Forms a tight complex with proteins S10 and S14.

In terms of biological role, binds the lower part of the 30S subunit head. Binds mRNA in the 70S ribosome, positioning it for translation. This is Small ribosomal subunit protein uS3 from Gluconacetobacter diazotrophicus (strain ATCC 49037 / DSM 5601 / CCUG 37298 / CIP 103539 / LMG 7603 / PAl5).